The sequence spans 574 residues: Splicing factor U2af large subunit A (574 aa).

A disordered region spans residues 1 to 180 (MAEHEEQPYE…SKRVSGFDQG (180 aa)). Positions 18 to 41 (PAPASAYAEYPAPEGSPPAAAAKP) are enriched in low complexity. Over residues 53 to 143 (RSQHETQPHD…ERRRDRDRDG (91 aa)) the composition is skewed to basic and acidic residues. Over residues 144-172 (HRRHRSRSRSPSKGRDRRSRSRSRSRSSK) the composition is skewed to basic residues. 3 RRM domains span residues 238–321 (RRVY…RPTD), 358–436 (DRIF…RANQ), and 479–565 (QVVS…YPED).

It belongs to the splicing factor SR family.

The protein localises to the nucleus. Its function is as follows. Necessary for the splicing of pre-mRNA. The polypeptide is Splicing factor U2af large subunit A (U2AF65A) (Oryza sativa subsp. japonica (Rice)).